The chain runs to 260 residues: Neuraminyllactose-binding hemagglutinin (260 aa).

A signal peptide spans 1-27 (MKANNHFKDFAWKKCLLGASVVALLVG). Residue Cys28 is the site of N-palmitoyl cysteine attachment. A lipid anchor (S-diacylglycerol cysteine) is attached at Cys28.

Its subcellular location is the cell outer membrane. In Helicobacter pylori (strain ATCC 700392 / 26695) (Campylobacter pylori), this protein is Neuraminyllactose-binding hemagglutinin (hpaA).